Here is a 417-residue protein sequence, read N- to C-terminus: NADH-quinone oxidoreductase subunit D (417 aa).

It belongs to the complex I 49 kDa subunit family. In terms of assembly, NDH-1 is composed of 14 different subunits. Subunits NuoB, C, D, E, F, and G constitute the peripheral sector of the complex.

The protein resides in the cell inner membrane. It carries out the reaction a quinone + NADH + 5 H(+)(in) = a quinol + NAD(+) + 4 H(+)(out). In terms of biological role, NDH-1 shuttles electrons from NADH, via FMN and iron-sulfur (Fe-S) centers, to quinones in the respiratory chain. The immediate electron acceptor for the enzyme in this species is believed to be ubiquinone. Couples the redox reaction to proton translocation (for every two electrons transferred, four hydrogen ions are translocated across the cytoplasmic membrane), and thus conserves the redox energy in a proton gradient. This chain is NADH-quinone oxidoreductase subunit D, found in Polynucleobacter necessarius subsp. necessarius (strain STIR1).